Here is a 148-residue protein sequence, read N- to C-terminus: HTH-type transcriptional regulator Rv2324 (148 aa).

One can recognise an HTH asnC-type domain in the interval 4-65 (LDDTDERILA…VVDRNALGWN (62 aa)). The H-T-H motif DNA-binding region spans 23 to 42 (FAEIGHKVSLSAPAVKRRVD).

Homodimer. Forms oligomers.

The DNA-binding activity of Rv2324 is modulated by interaction of Rv2324 with amino acids. Aspartate is the only effector amino acid that completely abolishes DNA binding. The majority of amino acids induce a dimer-tetramer or dimer-hexamer oligomeric transition. In response to amino-acid binding, adopts an open quaternary association, which is a part of the functional requirement to bind to non-symmetrically distributed target DNA binding sites. Its function is as follows. Transcriptional regulator involved in growth, DNA replication and damage control. Plays a crucial role in regulating survival and growth of M.tuberculosis. Could function as a global regulator in both the latent/persistent and active phases of growth. Binds to its own promoter region and to promoters of multiple metabolic genes, such as serB2, lat, ald and roc operon. In vitro, interacts with intrinsically curved and non-curved DNA molecules, and with both supercoiled and linear DNA, with higher affinity for supercoiled DNA. Binds to DNA recombination, replication and repair intermediates. The sequence is that of HTH-type transcriptional regulator Rv2324 from Mycobacterium tuberculosis (strain ATCC 25618 / H37Rv).